We begin with the raw amino-acid sequence, 240 residues long: uncharacterized protein (240 aa).

The ABC transporter domain maps to 2-223; it reads VRIQDLSLAF…GNAPRELHQA (222 aa). 34 to 41 provides a ligand contact to ATP; that stretch reads GSSGVGKS.

This sequence belongs to the ABC transporter superfamily.

This is an uncharacterized protein from Haemophilus influenzae (strain ATCC 51907 / DSM 11121 / KW20 / Rd).